The following is a 337-amino-acid chain: 4-hydroxythreonine-4-phosphate dehydrogenase (337 aa).

His137 and Thr138 together coordinate substrate. A divalent metal cation contacts are provided by His167, His212, and His267. Substrate is bound by residues Lys275, Asn284, and Arg293.

This sequence belongs to the PdxA family. Homodimer. Requires Zn(2+) as cofactor. Mg(2+) serves as cofactor. The cofactor is Co(2+).

It localises to the cytoplasm. The catalysed reaction is 4-(phosphooxy)-L-threonine + NAD(+) = 3-amino-2-oxopropyl phosphate + CO2 + NADH. The protein operates within cofactor biosynthesis; pyridoxine 5'-phosphate biosynthesis; pyridoxine 5'-phosphate from D-erythrose 4-phosphate: step 4/5. In terms of biological role, catalyzes the NAD(P)-dependent oxidation of 4-(phosphooxy)-L-threonine (HTP) into 2-amino-3-oxo-4-(phosphooxy)butyric acid which spontaneously decarboxylates to form 3-amino-2-oxopropyl phosphate (AHAP). The protein is 4-hydroxythreonine-4-phosphate dehydrogenase of Ectopseudomonas mendocina (strain ymp) (Pseudomonas mendocina).